Reading from the N-terminus, the 359-residue chain is Cytoplasmic tRNA 2-thiolation protein 2 (359 aa).

This sequence belongs to the CTU2/NCS2 family.

The protein localises to the cytoplasm. The protein operates within tRNA modification; 5-methoxycarbonylmethyl-2-thiouridine-tRNA biosynthesis. Its function is as follows. Plays a central role in 2-thiolation of mcm(5)S(2)U at tRNA wobble positions of tRNA(Lys), tRNA(Glu) and tRNA(Gln). May act by forming a heterodimer with NCS6 that ligates sulfur from thiocarboxylated URM1 onto the uridine of tRNAs at wobble position. Prior mcm(5) tRNA modification by the elongator complex is required for 2-thiolation. May also be involved in protein urmylation. The protein is Cytoplasmic tRNA 2-thiolation protein 2 of Ajellomyces capsulatus (strain NAm1 / WU24) (Darling's disease fungus).